Here is a 776-residue protein sequence, read N- to C-terminus: Endonuclease MutS2 (776 aa).

330-337 (GPNTGGKT) lines the ATP pocket. Residues 701 to 776 (LDLRGMRYEE…GSGATIAILK (76 aa)) enclose the Smr domain.

The protein belongs to the DNA mismatch repair MutS family. MutS2 subfamily. In terms of assembly, homodimer. Binds to stalled ribosomes, contacting rRNA.

Endonuclease that is involved in the suppression of homologous recombination and thus may have a key role in the control of bacterial genetic diversity. In terms of biological role, acts as a ribosome collision sensor, splitting the ribosome into its 2 subunits. Detects stalled/collided 70S ribosomes which it binds and splits by an ATP-hydrolysis driven conformational change. Acts upstream of the ribosome quality control system (RQC), a ribosome-associated complex that mediates the extraction of incompletely synthesized nascent chains from stalled ribosomes and their subsequent degradation. Probably generates substrates for RQC. This Lactococcus lactis subsp. cremoris (strain MG1363) protein is Endonuclease MutS2.